The primary structure comprises 205 residues: MEFLWAPLLGLCCSLAAADRHTVFWNSSNPKFRNEDYTIHVQLNDYVDIICPHYEDHSVADAAMEQYILYLVEHEEYQLCQPQSKDQVRWQCNRPSAKHGPEKLSEKFQRFTPFTLGKEFKEGHSYYYISKPIHQHEDRCLRLKVTVSGKITHSPQAHDNPQEKRLAADDPEVRVLHSIGHSAAPRLFPLAWTVLLLPLLLLQTP.

A signal peptide spans 1 to 18 (MEFLWAPLLGLCCSLAAA). Residues 19–151 (DRHTVFWNSS…RLKVTVSGKI (133 aa)) enclose the Ephrin RBD domain. N-linked (GlcNAc...) asparagine glycosylation occurs at Asn26. Intrachain disulfides connect Cys51-Cys92 and Cys80-Cys140. A lipid anchor (GPI-anchor amidated serine) is attached at Ser182. A propeptide spans 183 to 205 (AAPRLFPLAWTVLLLPLLLLQTP) (removed in mature form).

This sequence belongs to the ephrin family. In terms of assembly, monomer. Homodimer. Forms heterodimers with EPHA2. Binds to the receptor tyrosine kinases EPHA2, EPHA3, EPHA4, EPHA5, EPHA6 and EPHA7. Also binds with low affinity to EPHA1. Post-translationally, undergoes proteolysis by a metalloprotease to give rise to a soluble monomeric form. N-Glycosylation is required for binding to EPHA2 receptor and inducing its internalization. Brain. Down-regulated in primary glioma tissues compared to the normal tissues. The soluble monomeric form is expressed in the glioblastoma multiforme (GBM) and breast cancer cells (at protein level).

The protein localises to the cell membrane. Its subcellular location is the secreted. Its function is as follows. Cell surface GPI-bound ligand for Eph receptors, a family of receptor tyrosine kinases which are crucial for migration, repulsion and adhesion during neuronal, vascular and epithelial development. Binds promiscuously Eph receptors residing on adjacent cells, leading to contact-dependent bidirectional signaling into neighboring cells. Plays an important role in angiogenesis and tumor neovascularization. The recruitment of VAV2, VAV3 and PI3-kinase p85 subunit by phosphorylated EPHA2 is critical for EFNA1-induced RAC1 GTPase activation and vascular endothelial cell migration and assembly. Exerts anti-oncogenic effects in tumor cells through activation and down-regulation of EPHA2. Activates EPHA2 by inducing tyrosine phosphorylation which leads to its internalization and degradation. Acts as a negative regulator in the tumorigenesis of gliomas by down-regulating EPHA2 and FAK. Can evoke collapse of embryonic neuronal growth cone and regulates dendritic spine morphogenesis. The chain is Ephrin-A1 (EFNA1) from Homo sapiens (Human).